The chain runs to 4563 residues: Apolipoprotein B-100 (4563 aa).

Residues 1–27 (MDPPRPALLALLALPALLLLLLAGARA) form the signal peptide. Residues 32–126 (LENVSLVCPK…KNSEEFAAAM (95 aa)) form a heparin-binding region. A glycan (N-linked (GlcNAc...) asparagine) is linked at asparagine 34. 2 disulfides stabilise this stretch: cysteine 39/cysteine 88 and cysteine 78/cysteine 97. One can recognise a Vitellogenin domain in the interval 46 to 672 (FKHLRKYTYN…PNNYLPKESM (627 aa)). Asparagine 185 carries an N-linked (GlcNAc...) asparagine glycan. 4 disulfide bridges follow: cysteine 186-cysteine 212, cysteine 245-cysteine 261, cysteine 385-cysteine 390, and cysteine 478-cysteine 513. Residues 232 to 306 (TRPLSTLISS…RFFGEGTKKM (75 aa)) are heparin-binding. The interval 902-959 (NTNFFHESGLEAHVALKAGKLKFIIPSPKRPVKLLSGGNTLHLVSTTKTEVIPPLIEN) is heparin-binding. Cysteine 966 and cysteine 976 are oxidised to a cystine. Residue asparagine 983 is glycosylated (N-linked (GlcNAc...) asparagine). Cysteine 1112 is lipidated: S-palmitoyl cysteine. 3 N-linked (GlcNAc...) asparagine glycosylation sites follow: asparagine 1368, asparagine 1377, and asparagine 1523. Residue lysine 2004 is modified to N6-acetyllysine. Residues 2043 to 2178 (RDAVEKPQEF…EKLSQLQTYM (136 aa)) are heparin-binding. Asparagine 2239, asparagine 2560, asparagine 2779, asparagine 2982, and asparagine 3101 each carry an N-linked (GlcNAc...) asparagine glycan. The tract at residues 3161-3236 (FLKTTKQSFD…KIKFDKYKAE (76 aa)) is heparin-binding. The interval 3174–3184 (KAQYKKNKHRH) is basic (possible receptor binding region). Residues cysteine 3194 and cysteine 3324 are joined by a disulfide bond. N-linked (GlcNAc...) asparagine glycosylation is present at asparagine 3224. At serine 3279 the chain carries Phosphoserine. N-linked (GlcNAc...) asparagine glycans are attached at residues asparagine 3336 and asparagine 3358. Positions 3373 to 3393 (VIDALQYKLEGTTRLTRKRGL) are LDL receptor binding. A heparin-binding region spans residues 3383 to 3516 (GTTRLTRKRG…REYSGTIASE (134 aa)). The tract at residues 3386 to 3394 (RLTRKRGLK) is basic (possible receptor binding region). Residues asparagine 3411, asparagine 3465, and asparagine 3895 are each glycosylated (N-linked (GlcNAc...) asparagine). Position 4048 is a phosphoserine; by FAM20C (serine 4048). Threonine 4052 is subject to Phosphothreonine. N-linked (GlcNAc...) asparagine glycans are attached at residues asparagine 4237 and asparagine 4431.

Interacts with PCSK9. Interacts with MTTP. Interacts with AUP1. Interacts with CIDEB. Palmitoylated; structural requirement for proper assembly of the hydrophobic core of the lipoprotein particle.

The protein localises to the cytoplasm. It is found in the secreted. Its subcellular location is the lipid droplet. Its function is as follows. Apolipoprotein B is a major protein constituent of chylomicrons (apo B-48), LDL (apo B-100) and VLDL (apo B-100). Apo B-100 functions as a recognition signal for the cellular binding and internalization of LDL particles by the apoB/E receptor. The chain is Apolipoprotein B-100 (APOB) from Homo sapiens (Human).